The following is a 292-amino-acid chain: Sulfofructosephosphate aldolase (292 aa).

Lysine 193 serves as the catalytic Schiff-base intermediate with substrate.

It belongs to the aldolase LacD family. In terms of assembly, homotetramer.

The catalysed reaction is 6-deoxy-6-sulfo-D-fructose 1-phosphate = (2S)-3-sulfolactaldehyde + dihydroxyacetone phosphate. In terms of biological role, cleaves 6-deoxy-6-sulfo-D-fructose 1-phosphate (SFP) to form dihydroxyacetone phosphate (DHAP) and 3-sulfolactaldehyde (SLA). Can also catalyze the reverse reaction. In Salmonella typhimurium (strain LT2 / SGSC1412 / ATCC 700720), this protein is Sulfofructosephosphate aldolase (yihT).